The primary structure comprises 430 residues: Adenylosuccinate synthetase (430 aa).

Residues 12 to 18 (GDEGKGK) and 40 to 42 (GHT) each bind GTP. The active-site Proton acceptor is Asp-13. Positions 13 and 40 each coordinate Mg(2+). IMP-binding positions include 13–16 (DEGK), 38–41 (NAGH), Thr-128, Arg-142, Gln-223, Thr-238, and Arg-302. His-41 (proton donor) is an active-site residue. 298 to 304 (TTTGRPR) contributes to the substrate binding site. GTP is bound by residues Arg-304, 330 to 332 (SID), and 412 to 414 (SVG).

It belongs to the adenylosuccinate synthetase family. As to quaternary structure, homodimer. Mg(2+) is required as a cofactor.

The protein localises to the cytoplasm. It catalyses the reaction IMP + L-aspartate + GTP = N(6)-(1,2-dicarboxyethyl)-AMP + GDP + phosphate + 2 H(+). The protein operates within purine metabolism; AMP biosynthesis via de novo pathway; AMP from IMP: step 1/2. Functionally, plays an important role in the de novo pathway of purine nucleotide biosynthesis. Catalyzes the first committed step in the biosynthesis of AMP from IMP. The chain is Adenylosuccinate synthetase from Streptococcus gordonii (strain Challis / ATCC 35105 / BCRC 15272 / CH1 / DL1 / V288).